The following is a 298-amino-acid chain: Centromere protein O (298 aa).

The tract at residues 29 to 49 (NISNRKSEEPAVRKKESSLRT) is disordered. Residues 33-49 (RKSEEPAVRKKESSLRT) show a composition bias toward basic and acidic residues. Residue Ser-35 is modified to Phosphoserine. The stretch at 39–74 (AVRKKESSLRTKIRELRQQRDKLRAEVKQWGARVKE) forms a coiled coil.

Belongs to the CENP-O/MCM21 family. Component of the CENPA-CAD complex, composed of CENPI, CENPK, CENPL, CENPO, CENPP, CENPQ, CENPR and CENPS. The CENPA-CAD complex interacts with the CENPA-NAC complex, at least composed of CENPA, CENPC, CENPH, CENPM, CENPN, CENPT and CENPU.

It localises to the nucleus. It is found in the chromosome. The protein localises to the centromere. The protein resides in the kinetochore. Component of the CENPA-CAD (nucleosome distal) complex, a complex recruited to centromeres which is involved in assembly of kinetochore proteins, mitotic progression and chromosome segregation. May be involved in incorporation of newly synthesized CENPA into centromeres via its interaction with the CENPA-NAC complex. Modulates the kinetochore-bound levels of NDC80 complex. The chain is Centromere protein O (Cenpo) from Mus musculus (Mouse).